A 466-amino-acid polypeptide reads, in one-letter code: Xanthine permease XanQ (466 aa).

Residues 1-44 (MSDINHAGSDLIFELEDRPPFHQALVGAITHLLAIFVPMVTPAL) lie on the Cytoplasmic side of the membrane. Residues 45 to 65 (IVGAALQLSAETTAYLVSMAM) form a helical membrane-spanning segment. The Periplasmic portion of the chain corresponds to 66-74 (IASGIGTWL). Residues 75–95 (QVNRYGIVGSGLLSIQSVNFS) form a helical membrane-spanning segment. Residues 96 to 99 (FVTV) are Cytoplasmic-facing. Residues 100 to 120 (MIALGSSMKSDGFHEELIMSS) form a helical membrane-spanning segment. Residues 121–139 (LLGVSFVGAFLVVGSSFIL) are Periplasmic-facing. A helical transmembrane segment spans residues 140–160 (PYLRRVITPTVSGIVVLMIGL). The Cytoplasmic segment spans residues 161–170 (SLIKVGIIDF). A helical transmembrane segment spans residues 171–191 (GGGFAAKSSGTFGNYEHLGVG). The Periplasmic portion of the chain corresponds to 192–199 (LLVLIVVI). A helical transmembrane segment spans residues 200-220 (GFNCCRSPLLRMGGIAIGLCV). The Cytoplasmic segment spans residues 221–229 (GYIASLCLG). A helical transmembrane segment spans residues 230–250 (MVDFSSMRNLPLITIPHPFKY). The Periplasmic portion of the chain corresponds to 251–277 (GFSFSFHQFLVVGTIYLLSVLEAVGDI). The helical transmembrane segment at 278–298 (TATAMVSRRPIQGEEYQSRLK) threads the bilayer. Topologically, residues 299-317 (GGVLADGLVSVIASAVGSL) are cytoplasmic. A helical transmembrane segment spans residues 318-338 (PLTTFAQNNGVIQMTGVASRY). Residues 339–361 (VGRTIAVMLVILGLFPMIGGFFT) are Periplasmic-facing. Residues 362-382 (TIPSAVLGGAMTLMFSMIAIA) traverse the membrane as a helical segment. Position 383 (glycine 383) is a topological domain, cytoplasmic. A helical transmembrane segment spans residues 384–403 (IRIIITNGLKRRETLIVATS). At 404-444 (LGLGLGVSYDPEIFKILPASIYVLVENPICAGGLTAILLNI) the chain is on the periplasmic side. Residues 445 to 465 (ILPGGYRQENVLPGITSAEEM) traverse the membrane as a helical segment. A topological domain (cytoplasmic) is located at residue aspartate 466.

The protein belongs to the nucleobase:cation symporter-2 (NCS2) (TC 2.A.40) family.

The protein localises to the cell inner membrane. The catalysed reaction is xanthine(in) + H(+)(in) = xanthine(out) + H(+)(out). Its function is as follows. Specific, proton motive force-dependent high-affinity transporter for xanthine. This chain is Xanthine permease XanQ (xanQ), found in Escherichia coli O157:H7.